The chain runs to 277 residues: 3-methyl-2-oxobutanoate hydroxymethyltransferase (277 aa).

Positions 58 and 97 each coordinate Mg(2+). 3-methyl-2-oxobutanoate is bound by residues 58–59 (DS), aspartate 97, and lysine 127. Glutamate 129 is a Mg(2+) binding site. Glutamate 195 acts as the Proton acceptor in catalysis.

The protein belongs to the PanB family. Homodecamer; pentamer of dimers. Mg(2+) serves as cofactor.

It is found in the cytoplasm. The catalysed reaction is 3-methyl-2-oxobutanoate + (6R)-5,10-methylene-5,6,7,8-tetrahydrofolate + H2O = 2-dehydropantoate + (6S)-5,6,7,8-tetrahydrofolate. It functions in the pathway cofactor biosynthesis; (R)-pantothenate biosynthesis; (R)-pantoate from 3-methyl-2-oxobutanoate: step 1/2. Functionally, catalyzes the reversible reaction in which hydroxymethyl group from 5,10-methylenetetrahydrofolate is transferred onto alpha-ketoisovalerate to form ketopantoate. The chain is 3-methyl-2-oxobutanoate hydroxymethyltransferase from Leifsonia xyli subsp. xyli (strain CTCB07).